Consider the following 207-residue polypeptide: MSVYAVGLTGGVACGKSLLAQLFEALNTTVVDADTIARQVVEPGPVLNCIVARFGSKILRADGCLDRRFLRQRVFADVAERKALEAIVHPVIRARLKQAAAAAAGPYVLVVIPLLAEAGGRIGYPWLQRILVVDAIPEVQHARLMQRDSIDAEQASLMIAAQIGRKERLAIADDIVFNDGDPAHLGGQVCNLDARYRALASVFSDVD.

The 199-residue stretch at 5–203 (AVGLTGGVAC…ARYRALASVF (199 aa)) folds into the DPCK domain. 13 to 18 (ACGKSL) is a binding site for ATP.

This sequence belongs to the CoaE family.

Its subcellular location is the cytoplasm. It carries out the reaction 3'-dephospho-CoA + ATP = ADP + CoA + H(+). It functions in the pathway cofactor biosynthesis; coenzyme A biosynthesis; CoA from (R)-pantothenate: step 5/5. Functionally, catalyzes the phosphorylation of the 3'-hydroxyl group of dephosphocoenzyme A to form coenzyme A. The polypeptide is Dephospho-CoA kinase (Xylella fastidiosa (strain Temecula1 / ATCC 700964)).